The primary structure comprises 31 residues: Cytochrome b6-f complex subunit 6 (31 aa).

Residues 4–26 (ITSYFGFLLAASTITPALLIGLS) form a helical membrane-spanning segment.

Belongs to the PetL family. As to quaternary structure, the 4 large subunits of the cytochrome b6-f complex are cytochrome b6, subunit IV (17 kDa polypeptide, PetD), cytochrome f and the Rieske protein, while the 4 small subunits are PetG, PetL, PetM and PetN. The complex functions as a dimer.

It is found in the plastid. It localises to the chloroplast thylakoid membrane. In terms of biological role, component of the cytochrome b6-f complex, which mediates electron transfer between photosystem II (PSII) and photosystem I (PSI), cyclic electron flow around PSI, and state transitions. PetL is important for photoautotrophic growth as well as for electron transfer efficiency and stability of the cytochrome b6-f complex. This chain is Cytochrome b6-f complex subunit 6, found in Liriodendron tulipifera (Tuliptree).